The chain runs to 211 residues: Large ribosomal subunit protein uL3 (211 aa).

Glutamine 150 bears the N5-methylglutamine mark.

Belongs to the universal ribosomal protein uL3 family. As to quaternary structure, part of the 50S ribosomal subunit. Forms a cluster with proteins L14 and L19. Post-translationally, methylated by PrmB.

Functionally, one of the primary rRNA binding proteins, it binds directly near the 3'-end of the 23S rRNA, where it nucleates assembly of the 50S subunit. This chain is Large ribosomal subunit protein uL3, found in Pseudomonas fluorescens (strain Pf0-1).